The primary structure comprises 202 residues: 3-isopropylmalate dehydratase small subunit (202 aa).

The protein belongs to the LeuD family. LeuD type 1 subfamily. As to quaternary structure, heterodimer of LeuC and LeuD.

It catalyses the reaction (2R,3S)-3-isopropylmalate = (2S)-2-isopropylmalate. It participates in amino-acid biosynthesis; L-leucine biosynthesis; L-leucine from 3-methyl-2-oxobutanoate: step 2/4. Its function is as follows. Catalyzes the isomerization between 2-isopropylmalate and 3-isopropylmalate, via the formation of 2-isopropylmaleate. The sequence is that of 3-isopropylmalate dehydratase small subunit from Buchnera aphidicola subsp. Pemphigus spyrothecae.